Reading from the N-terminus, the 492-residue chain is Dipeptide permease D (492 aa).

A run of 13 helical transmembrane segments spans residues 14-34 (VVAL…LLIL), 49-69 (ALFS…GYLA), 91-111 (LVLG…AIIV), 138-158 (GGFS…PIAC), 167-187 (WAMG…IFLC), 212-232 (NWGW…VLFW), 236-256 (SVYA…RIYL), 269-289 (LIVV…QGGS), 312-332 (MFQS…AWLV), 344-364 (IWGK…ILTL), 379-399 (LMVL…PVAM), 413-433 (VLTG…AGVI), and 458-478 (VFSQ…VIWL).

This sequence belongs to the major facilitator superfamily. Proton-dependent oligopeptide transporter (POT/PTR) (TC 2.A.17) family. DtpD subfamily.

It localises to the cell inner membrane. Probable proton-dependent permease that transports dipeptides. The sequence is that of Dipeptide permease D from Klebsiella pneumoniae (strain 342).